Here is a 159-residue protein sequence, read N- to C-terminus: HSP70 co-chaperone SNL1 (159 aa).

Residues 1-12 (MSHNAMEHWKSK) are Perinuclear space-facing. The chain crosses the membrane as a helical; Signal-anchor for type II membrane protein span at residues 13-35 (LSKTSTSTYVLLAVIAVVFLVTI). The Cytoplasmic segment spans residues 36–159 (RRPNGSKGKS…AMLKSLDSLK (124 aa)). The tract at residues 39–64 (NGSKGKSSKKRASKKNKKGKNQFEKA) is disordered. Over residues 44 to 58 (KSSKKRASKKNKKGK) the composition is skewed to basic residues. In terms of domain architecture, BAG spans 73 to 159 (QIDNVSLRYG…AMLKSLDSLK (87 aa)).

Interacts with the HSP70 family members SSA1, SSA4, and SSB1. These interactions are strongly reduced by ADP and ATP.

Its subcellular location is the endoplasmic reticulum membrane. The protein localises to the nucleus membrane. Stimulator of ATPase activity of molecular chaperones of the HSP70 family (principally of the SSA class). Stimulation is important for HSP70-substrate complex dissociation after folding of newly synthesized or refolded proteins. SNL1 is probably involved in nuclear pore biogenesis and in particular the folding or refolding of misfolded NUP116, GLE2 and NIC96. The protein is HSP70 co-chaperone SNL1 (SNL1) of Saccharomyces cerevisiae (strain ATCC 204508 / S288c) (Baker's yeast).